The chain runs to 947 residues: Protein NETWORKED 2A (947 aa).

The NAB domain maps to 10–90; that stretch reads YSWWWASHIR…ERYDHLSREL (81 aa). The tract at residues 105 to 131 is disordered; sequence VQFPLEDDSDENEDYDGRPRKPPKHLH. Residues 109-118 are compositionally biased toward acidic residues; the sequence is LEDDSDENED. Coiled-coil stretches lie at residues 348–454 and 568–619; these read KLAE…IQDV and VLRD…QKLD. 2 stretches are compositionally biased toward basic and acidic residues: residues 618-627 and 635-644; these read LDTTGKDSPH and LEHEQGHHET. Disordered stretches follow at residues 618–675, 743–763, and 911–947; these read LDTT…RTKS, RIES…AVAS, and KNRQ…KLPE. A compositionally biased stretch (polar residues) spans 645–660; sequence VSISPTSNFSVATTPH. Residues 662–675 are compositionally biased toward basic and acidic residues; sequence QVGDVKRTPGRTKS. Residues 722–809 are a coiled coil; sequence VHQIQKYQTT…LANIQEEIAR (88 aa). 2 stretches are compositionally biased toward polar residues: residues 749–761 and 915–927; these read QQES…NTAV and QKQS…SCVS.

It belongs to the NET family. As to expression, expressed specifically in pollen.

The protein resides in the cell membrane. Its function is as follows. Plant-specific actin binding protein. Associates with F-actin at the plasma membrane in growing pollen tubes. May be part of a membrane-cytoskeletal adapter complex. The protein is Protein NETWORKED 2A of Arabidopsis thaliana (Mouse-ear cress).